The following is a 1090-amino-acid chain: Exocyst complex component SEC5A (1090 aa).

Positions 18 to 128 (LKEQAKRDLT…ARKEDDGAWD (111 aa)) are disordered. Low complexity predominate over residues 45–69 (QQPRQQKPVAAAAAPPKKSAAAVRK). A compositionally biased stretch (basic and acidic residues) spans 109–124 (RGSDVREKGRARKEDD). Ser180 bears the Phosphoserine mark. Disordered stretches follow at residues 759-783 (TSRQ…NTYG), 987-1010 (VETP…DKQS), and 1046-1090 (APLE…PRRR). Positions 998-1009 (RGSEDTVSDDKQ) are enriched in basic and acidic residues. Positions 1058–1082 (TYSSFRGSMDSPSRNYRGSQSSGSP) are enriched in polar residues.

Belongs to the SEC5 family. As to quaternary structure, the exocyst complex is composed of SEC3, SEC5, SEC6, SEC8, SEC10, EXO70A1 and EXO84B. Interacts with SEC3A and EXO70B1. Binds to EXO70H1 and EXO70B2. Binds directly to B1L.

The protein localises to the cytoplasm. It localises to the cytosol. It is found in the secreted. Its subcellular location is the extracellular exosome. Functionally, component of the exocyst complex involved in the docking of exocytic vesicles with fusion sites on the plasma membrane during regulated or polarized secretion. Involved in polarized cell growth and organ morphogenesis. During cytokinesis, involved in cell plate initiation, cell plate maturation and formation of new primary cell wall. Probable component of an exocyst subcomplex specifically involved in autophagy-related, Golgi-independent membrane traffic to the vacuole. Regulates autophagosome formation and autophagy-related Golgi-independent import into the vacuole. The protein is Exocyst complex component SEC5A of Arabidopsis thaliana (Mouse-ear cress).